The following is a 314-amino-acid chain: Homoserine O-succinyltransferase (314 aa).

Residue Cys142 is the Acyl-thioester intermediate of the active site. Substrate-binding residues include Lys163 and Ser192. Residue His235 is the Proton acceptor of the active site. Residue Glu237 is part of the active site. Arg249 serves as a coordination point for substrate.

Belongs to the MetA family.

The protein localises to the cytoplasm. The enzyme catalyses L-homoserine + succinyl-CoA = O-succinyl-L-homoserine + CoA. It participates in amino-acid biosynthesis; L-methionine biosynthesis via de novo pathway; O-succinyl-L-homoserine from L-homoserine: step 1/1. Its function is as follows. Transfers a succinyl group from succinyl-CoA to L-homoserine, forming succinyl-L-homoserine. The protein is Homoserine O-succinyltransferase of Shewanella frigidimarina (strain NCIMB 400).